The following is a 342-amino-acid chain: Phosphate acyltransferase (342 aa).

It belongs to the PlsX family. Homodimer. Probably interacts with PlsY.

The protein resides in the cytoplasm. It carries out the reaction a fatty acyl-[ACP] + phosphate = an acyl phosphate + holo-[ACP]. The protein operates within lipid metabolism; phospholipid metabolism. Its function is as follows. Catalyzes the reversible formation of acyl-phosphate (acyl-PO(4)) from acyl-[acyl-carrier-protein] (acyl-ACP). This enzyme utilizes acyl-ACP as fatty acyl donor, but not acyl-CoA. The protein is Phosphate acyltransferase of Shewanella amazonensis (strain ATCC BAA-1098 / SB2B).